The following is a 154-amino-acid chain: 3-hydroxyacyl-[acyl-carrier-protein] dehydratase FabZ (154 aa).

Residue His-57 is part of the active site.

The protein belongs to the thioester dehydratase family. FabZ subfamily.

It localises to the cytoplasm. It carries out the reaction a (3R)-hydroxyacyl-[ACP] = a (2E)-enoyl-[ACP] + H2O. Functionally, involved in unsaturated fatty acids biosynthesis. Catalyzes the dehydration of short chain beta-hydroxyacyl-ACPs and long chain saturated and unsaturated beta-hydroxyacyl-ACPs. The chain is 3-hydroxyacyl-[acyl-carrier-protein] dehydratase FabZ from Sinorhizobium fredii (strain NBRC 101917 / NGR234).